We begin with the raw amino-acid sequence, 192 residues long: Outer-membrane lipoprotein LolB (192 aa).

An N-terminal signal peptide occupies residues 1–17 (MTYRTLCILAFTALISA). Cys18 carries N-palmitoyl cysteine lipidation. A lipid anchor (S-diacylglycerol cysteine) is attached at Cys18.

This sequence belongs to the LolB family. In terms of assembly, monomer.

It is found in the cell outer membrane. Its function is as follows. Plays a critical role in the incorporation of lipoproteins in the outer membrane after they are released by the LolA protein. This Marinomonas sp. (strain MWYL1) protein is Outer-membrane lipoprotein LolB.